A 528-amino-acid chain; its full sequence is MSNSQSEGQRQPAIVILDFGSQYSELIARRVRETEVYSLVMSYSTSADELRQLAPKGIILSGGPSSVYAERAPLCDPNIWDLGIPVLGVCYGMQLMVQQLGGRVEMATGKAEYGKAPLEIDDPTDLLTNVENGSTMWMSHGDSVRALPEGFVRLAHTANTPDAAVAYHTRSLYGVQFHPEVVHSTDGMSLIRNFVYHICGCEPDWTTTAFIEEAVSQVRSQVGDKRVLLALSGGVDSSTLAFLLKKAIGDQLTCMFIDQGFMRKGEPEFLMDFFDRKFNINVEYINARQRFISKLNGIVDPEEKRKIIGTEFIRVFEEESNRLGPFDYLAQGTLYPDVIESAGTNIDPKTGERVAVKIKSHHNVGGLPKDLQFKLVEPLRRLFKDEVRKVGRSLGLPEEIVRRHPFPGPGLAIRILGEVTDEKLNCLRDADLIVREEIREAGLYHEIWQAFAVLLPVRSVGVMGDQRTYAWPIVLRCVSSEDGMTADWSRLPDELLERISNRIVNEVRGVNRVVLDITSKPPGTIEWE.

Positions 13 to 204 constitute a Glutamine amidotransferase type-1 domain; the sequence is AIVILDFGSQ…VYHICGCEPD (192 aa). Residue C90 is the Nucleophile of the active site. Active-site residues include H178 and E180. The GMPS ATP-PPase domain maps to 205–403; it reads WTTTAFIEEA…LGLPEEIVRR (199 aa). An ATP-binding site is contributed by 232–238; the sequence is SGGVDSS.

As to quaternary structure, homodimer.

It carries out the reaction XMP + L-glutamine + ATP + H2O = GMP + L-glutamate + AMP + diphosphate + 2 H(+). It participates in purine metabolism; GMP biosynthesis; GMP from XMP (L-Gln route): step 1/1. Functionally, catalyzes the synthesis of GMP from XMP. This Prochlorococcus marinus (strain MIT 9303) protein is GMP synthase [glutamine-hydrolyzing].